A 435-amino-acid polypeptide reads, in one-letter code: Tol-Pal system protein TolB (435 aa).

The first 20 residues, 1–20 (MRKIIAGVFIFVFLISNLYA), serve as a signal peptide directing secretion.

It belongs to the TolB family. As to quaternary structure, the Tol-Pal system is composed of five core proteins: the inner membrane proteins TolA, TolQ and TolR, the periplasmic protein TolB and the outer membrane protein Pal. They form a network linking the inner and outer membranes and the peptidoglycan layer.

The protein resides in the periplasm. In terms of biological role, part of the Tol-Pal system, which plays a role in outer membrane invagination during cell division and is important for maintaining outer membrane integrity. This is Tol-Pal system protein TolB from Francisella tularensis subsp. tularensis (strain WY96-3418).